We begin with the raw amino-acid sequence, 423 residues long: CinA-like protein (423 aa).

The protein belongs to the CinA family.

This is CinA-like protein from Chlorobaculum tepidum (strain ATCC 49652 / DSM 12025 / NBRC 103806 / TLS) (Chlorobium tepidum).